Reading from the N-terminus, the 647-residue chain is Threonine--tRNA ligase (647 aa).

The 61-residue stretch at 1 to 61 folds into the TGS domain; it reads MINITFPDGA…TEDGSIEIVT (61 aa). A catalytic region spans residues 242 to 540; that stretch reads DHRKLGKELD…LIENYKGAFP (299 aa). 3 residues coordinate Zn(2+): Cys336, His387, and His517.

Belongs to the class-II aminoacyl-tRNA synthetase family. In terms of assembly, homodimer. It depends on Zn(2+) as a cofactor.

Its subcellular location is the cytoplasm. It catalyses the reaction tRNA(Thr) + L-threonine + ATP = L-threonyl-tRNA(Thr) + AMP + diphosphate + H(+). Functionally, catalyzes the attachment of threonine to tRNA(Thr) in a two-step reaction: L-threonine is first activated by ATP to form Thr-AMP and then transferred to the acceptor end of tRNA(Thr). Also edits incorrectly charged L-seryl-tRNA(Thr). The polypeptide is Threonine--tRNA ligase (Streptococcus pneumoniae (strain JJA)).